We begin with the raw amino-acid sequence, 974 residues long: Pentatricopeptide repeat-containing protein At5g61990, mitochondrial (974 aa).

A mitochondrion-targeting transit peptide spans 1–31 (MMGSMLFRKRTLVTRANFLLFRSFSVNVEKL). PPR repeat units lie at residues 96–130 (KLDS…NWPV), 150–184 (DGVL…ELVP), 185–219 (RLSR…NVVF), 220–250 (DVKT…TEKE), 257–275 (NVDG…GLVP), 276–310 (LKYT…GVSL), 311–345 (DNHT…GINI), 346–380 (KPYM…GLIP), 381–415 (QAQA…NIVI), 416–450 (SPYT…GCRP), 451–485 (NVVI…GIAP), 486–520 (DIFC…GLKP), 521–555 (NAFT…GVLP), 556–590 (NKVL…GILG), 591–625 (DAKT…GIAP), 626–660 (DVFS…GLTP), 661–695 (NVII…GLHP), 696–730 (NAVT…GLVP), 731–761 (DSFV…NKKG), 765–799 (STAP…SFDR), 804–838 (NDVT…NLMP), 839–873 (TVIT…GIEP), 874–908 (DHIM…NAVD), and 914–948 (SIST…QYIP).

This sequence belongs to the PPR family. P subfamily.

It is found in the mitochondrion. This chain is Pentatricopeptide repeat-containing protein At5g61990, mitochondrial, found in Arabidopsis thaliana (Mouse-ear cress).